The sequence spans 457 residues: 4-hydroxybenzoate transporter PcaK (457 aa).

The Cytoplasmic portion of the chain corresponds to 1–34; it reads MPKEANMASQDYATQRSSLDAQALINDAPLSRYQ. Residues 35-55 traverse the membrane as a helical segment; the sequence is WLIAIVCFLIVFVDGIDTAAM. Residues 56 to 72 are Periplasmic-facing; it reads GFIAPALAQDWGVDRSQ. The chain crosses the membrane as a helical span at residues 73–93; that stretch reads LGPVMSAALGGMIIGALVSGP. The Cytoplasmic portion of the chain corresponds to 94-101; that stretch reads TADRFGRK. Residues 102–122 traverse the membrane as a helical segment; sequence IVLSMSMLVFGGFTLACAYST. Over 123 to 128 the chain is Periplasmic; that stretch reads NLDSLV. The chain crosses the membrane as a helical span at residues 129-149; sequence IFRFLTGIGLGAAMPNATTLF. The Cytoplasmic portion of the chain corresponds to 150–168; the sequence is SEYCPARIRSLLVTCMFCG. Residues 169 to 189 traverse the membrane as a helical segment; sequence YNLGMAIGGFISSWLIPAFGW. Topologically, residues 190 to 191 are periplasmic; that stretch reads HS. A helical membrane pass occupies residues 192–212; the sequence is LFLLGGWAPLILMLLVIFFLP. The Cytoplasmic segment spans residues 213–274; the sequence is ESYRFLIVKG…LFSAKYVKGT (62 aa). A helical membrane pass occupies residues 275-295; sequence VLLWVTYFMGLVMIYLLTSWL. The Periplasmic portion of the chain corresponds to 296–310; sequence PTLMRETGASLERAA. A helical transmembrane segment spans residues 311–331; the sequence is FLGGLFQFGGVLSALFIGWAM. The Cytoplasmic segment spans residues 332–338; it reads DRFNPNR. Residues 339–359 form a helical membrane-spanning segment; that stretch reads IIAGFYLAAGIFAVIVGQSLS. Topologically, residues 360–363 are periplasmic; that stretch reads NPTL. The helical transmembrane segment at 364-384 threads the bilayer; sequence LALFILCAGIAVNGAQSSMPV. The Cytoplasmic portion of the chain corresponds to 385–400; sequence LSARFYPTQCRATGVA. A helical membrane pass occupies residues 401–421; sequence WMSGIGRFGAVFGAWIGAVLL. Over 422-426 the chain is Periplasmic; sequence GNNWS. Residues 427-447 traverse the membrane as a helical segment; sequence FTMILSMLIIPAAAAAIAIFV. Residues 448 to 457 lie on the Cytoplasmic side of the membrane; that stretch reads KSLVAHTDAT.

The protein belongs to the major facilitator superfamily. Aromatic acid:H(+) symporter (AAHS) (TC 2.A.1.15) family. As to quaternary structure, homotrimer.

The protein resides in the cell inner membrane. Its function is as follows. Uptake of 4-hydroxybenzoate (4-HB). Can also transport a variety of aromatic acids with hydroxyl substitutions at the 2-, 3- and 4-positions, such as salicylate, 2,4-dihydroxybenzoate, protocatechuate, 3-hydroxybenzoate, vanillate and gentisate. This Acinetobacter baylyi (strain ATCC 33305 / BD413 / ADP1) protein is 4-hydroxybenzoate transporter PcaK.